A 341-amino-acid chain; its full sequence is Protein pelota homolog (341 aa).

Belongs to the eukaryotic release factor 1 family. Pelota subfamily. Monomer. A divalent metal cation is required as a cofactor.

The protein localises to the cytoplasm. Functionally, may function in recognizing stalled ribosomes, interact with stem-loop structures in stalled mRNA molecules, and effect endonucleolytic cleavage of the mRNA. May play a role in the release non-functional ribosomes and degradation of damaged mRNAs. Has endoribonuclease activity. The protein is Protein pelota homolog of Methanospirillum hungatei JF-1 (strain ATCC 27890 / DSM 864 / NBRC 100397 / JF-1).